The primary structure comprises 355 residues: Transcription factor TCP13 (355 aa).

Residues Met1–Trp57 are disordered. In terms of domain architecture, TCP spans Gly74–Leu132. The interval Thr329 to Met355 is disordered. The span at Leu341–Met355 shows a compositional bias: basic and acidic residues.

As to quaternary structure, interacts with AHL27 and AHL29. Interacts with SPL. Interacts with KIN10; KIN11 and FLZ3. In terms of tissue distribution, expressed in cotyledons, particularly in the vascular region, in leaves, buds, flowers and immature siliques, and, to a lower extent, in roots.

The protein resides in the nucleus. It is found in the plastid. Its subcellular location is the chloroplast. In terms of biological role, plays a pivotal role in the control of morphogenesis of shoot organs by negatively regulating the expression of boundary-specific genes such as CUC genes, probably through the induction of miRNA (e.g. miR164). Binds to the 3'-ACC-5' repeats in the light-responsive promoter (LRP) of psbD, and activates its transcription. Participates in ovule development. This Arabidopsis thaliana (Mouse-ear cress) protein is Transcription factor TCP13 (TCP13).